The chain runs to 82 residues: Small ribosomal subunit protein bS18 (82 aa).

Positions 1–20 (MVDINQIPTRRPFHRRHKTC) are disordered.

Belongs to the bacterial ribosomal protein bS18 family. As to quaternary structure, part of the 30S ribosomal subunit. Forms a tight heterodimer with protein bS6.

Binds as a heterodimer with protein bS6 to the central domain of the 16S rRNA, where it helps stabilize the platform of the 30S subunit. The protein is Small ribosomal subunit protein bS18 of Brucella suis (strain ATCC 23445 / NCTC 10510).